The following is a 365-amino-acid chain: 3-isopropylmalate dehydrogenase (365 aa).

4 residues coordinate substrate: R96, R106, R134, and D224. The Mg(2+) site is built by D224, D248, and D252. Residue 288 to 300 (GSAPTIAKQNIAN) participates in NAD(+) binding.

The protein belongs to the isocitrate and isopropylmalate dehydrogenases family. LeuB type 1 subfamily. Homodimer. It depends on Mg(2+) as a cofactor. Requires Mn(2+) as cofactor.

The protein localises to the cytoplasm. It carries out the reaction (2R,3S)-3-isopropylmalate + NAD(+) = 4-methyl-2-oxopentanoate + CO2 + NADH. It functions in the pathway amino-acid biosynthesis; L-leucine biosynthesis; L-leucine from 3-methyl-2-oxobutanoate: step 3/4. Catalyzes the oxidation of 3-carboxy-2-hydroxy-4-methylpentanoate (3-isopropylmalate) to 3-carboxy-4-methyl-2-oxopentanoate. The product decarboxylates to 4-methyl-2 oxopentanoate. The chain is 3-isopropylmalate dehydrogenase from Dehalococcoides mccartyi (strain ATCC BAA-2266 / KCTC 15142 / 195) (Dehalococcoides ethenogenes (strain 195)).